Reading from the N-terminus, the 674-residue chain is Growth arrest-specific protein 6 (674 aa).

A signal peptide spans 1-27 (MPPPPGPAAALGTALLLLLLASESSHT). The Gla domain maps to 50-91 (FEEAKQGHLERECVEEVCSKEEAREVFENDPETEYFYPRYQE). Cys62 and Cys67 are oxidised to a cystine. Ser68 carries the phosphoserine modification. One can recognise an EGF-like 1; calcium-binding domain in the interval 113-151 (LPDQCTPNPCDKKGTHICQDLMGNFFCVCTDGWGGRLCD). Cystine bridges form between Cys117–Cys130, Cys122–Cys139, Cys141–Cys150, Cys157–Cys168, Cys164–Cys177, Cys179–Cys192, Cys198–Cys209, Cys204–Cys218, Cys220–Cys233, Cys239–Cys248, Cys244–Cys257, Cys259–Cys274, Cys280–Cys566, and Cys441–Cys467. The 41-residue stretch at 153 to 193 (DVNECVQKNGGCSQVCHNKPGSFQCACHSGFSLASDGQTCQ) folds into the EGF-like 2; calcium-binding domain. In terms of domain architecture, EGF-like 3; calcium-binding spans 194–234 (DIDECTDSDTCGDARCKNLPGSYSCLCDEGYTYSSKEKTCQ). The EGF-like 4; calcium-binding domain occupies 235 to 275 (DVDECQQDRCEQTCVNSPGSYTCHCDGRGGLKLSPDMDTCE). 2 Laminin G-like domains span residues 295–467 (GRMF…KMQC) and 474–666 (GSFF…SHSC). Residues Asp326 and Glu328 each coordinate Ca(2+). Asn417 is a glycosylation site (N-linked (GlcNAc...) asparagine). Ca(2+) is bound at residue Arg437. N-linked (GlcNAc...) asparagine glycosylation occurs at Asn488. At Thr609 the chain carries Phosphothreonine. Phosphoserine is present on Ser614. Phosphothreonine is present on residues Thr617 and Thr633. Tyr636 carries the phosphotyrosine modification. A disulfide bridge connects residues Cys639 and Cys666. Asp652 is a binding site for Ca(2+).

In terms of assembly, heterodimer and heterotetramer with AXL. In terms of processing, gamma-carboxyglutamate residues are formed by vitamin K dependent carboxylation. These residues are essential for the binding of calcium.

It is found in the secreted. Ligand for tyrosine-protein kinase receptors AXL, TYRO3 and MER whose signaling is implicated in cell growth and survival, cell adhesion and cell migration. GAS6/AXL signaling plays a role in various processes such as endothelial cell survival during acidification by preventing apoptosis, optimal cytokine signaling during human natural killer cell development, hepatic regeneration, gonadotropin-releasing hormone neuron survival and migration, platelet activation, or regulation of thrombotic responses. In Mus musculus (Mouse), this protein is Growth arrest-specific protein 6 (Gas6).